Consider the following 337-residue polypeptide: ATP-dependent 6-phosphofructokinase (337 aa).

Glycine 11 lines the ATP pocket. 21-25 (RAVVR) contacts ADP. ATP-binding positions include 72 to 73 (RY) and 102 to 105 (GDGS). Aspartate 103 contacts Mg(2+). 125–127 (TID) is a binding site for substrate. The active-site Proton acceptor is the aspartate 127. Arginine 154 contributes to the ADP binding site. Substrate is bound by residues arginine 162 and 169–171 (MGR). Residues 185–187 (GAD), lysine 212, and 214–216 (KNH) each bind ADP. Substrate is bound by residues glutamate 223, arginine 245, and 251 to 254 (HILR).

The protein belongs to the phosphofructokinase type A (PFKA) family. ATP-dependent PFK group I subfamily. Prokaryotic clade 'B1' sub-subfamily. Homotetramer. Requires Mg(2+) as cofactor.

It localises to the cytoplasm. It carries out the reaction beta-D-fructose 6-phosphate + ATP = beta-D-fructose 1,6-bisphosphate + ADP + H(+). It participates in carbohydrate degradation; glycolysis; D-glyceraldehyde 3-phosphate and glycerone phosphate from D-glucose: step 3/4. Its activity is regulated as follows. Allosterically activated by ADP and other diphosphonucleosides, and allosterically inhibited by phosphoenolpyruvate. Functionally, catalyzes the phosphorylation of D-fructose 6-phosphate to fructose 1,6-bisphosphate by ATP, the first committing step of glycolysis. The polypeptide is ATP-dependent 6-phosphofructokinase (Streptococcus pyogenes serotype M1).